The sequence spans 234 residues: tRNA (guanine-N(1)-)-methyltransferase (234 aa).

Residues Gly112 and 132 to 137 contribute to the S-adenosyl-L-methionine site; that span reads IGDFIL.

This sequence belongs to the RNA methyltransferase TrmD family. In terms of assembly, homodimer.

Its subcellular location is the cytoplasm. It carries out the reaction guanosine(37) in tRNA + S-adenosyl-L-methionine = N(1)-methylguanosine(37) in tRNA + S-adenosyl-L-homocysteine + H(+). Functionally, specifically methylates guanosine-37 in various tRNAs. In Campylobacter jejuni (strain RM1221), this protein is tRNA (guanine-N(1)-)-methyltransferase.